Consider the following 414-residue polypeptide: Cytosolic-abundant heat soluble protein 89226 (414 aa).

2 stretches are compositionally biased toward basic and acidic residues: residues 27–45 and 69–84; these read IGEDRGKEDPGMNFQDKRP and AGQRLREHLSESERLR. The disordered stretch occupies residues 27-155; that stretch reads IGEDRGKEDP…SNPGMNNGMT (129 aa). Low complexity-rich tracts occupy residues 86-101 and 120-134; these read SRSSTSSKSSSFVEPS and SSNRQNSSSNVSSSD. Residues 142 to 155 are compositionally biased toward polar residues; the sequence is ASRNSNPGMNNGMT. 2 CAHS motif regions span residues 305–323 and 342–360; these read YRNAVEADAELIRQTLERQ and QQQEIRLEAEYAMRALEQE. Residues 341–376 adopt a coiled-coil conformation; the sequence is RQQQEIRLEAEYAMRALEQERVNARAALDQAMASTN. The segment covering 388 to 405 has biased composition (polar residues); it reads THSQGRVTTTSESRTSQA. The interval 388–414 is disordered; it reads THSQGRVTTTSESRTSQARGPATAAVI.

The protein belongs to the Cytosolic-abundant heat soluble protein (CAHS) family.

It localises to the cytoplasm. CAHS proteins are cytosolic heat soluble proteins that seem to contribute to the anhydrobiosis in tardigrades, but their specific mechanisms are yet to be identified. It is possible that protection during anhydrobiosis might occur via the stabilization of vitrifying small molecules such as sugars, but not via the direct glass transition of CAHS proteins themselves. This is Cytosolic-abundant heat soluble protein 89226 from Hypsibius exemplaris (Freshwater tardigrade).